We begin with the raw amino-acid sequence, 157 residues long: uncharacterized protein (157 aa).

The first 19 residues, 1–19, serve as a signal peptide directing secretion; it reads MRKYLIILVLLLFLSSSFG.

This is an uncharacterized protein from Methanocaldococcus jannaschii (strain ATCC 43067 / DSM 2661 / JAL-1 / JCM 10045 / NBRC 100440) (Methanococcus jannaschii).